Here is a 320-residue protein sequence, read N- to C-terminus: Methionyl-tRNA formyltransferase (320 aa).

114-117 (SLLP) serves as a coordination point for (6S)-5,6,7,8-tetrahydrofolate.

It belongs to the Fmt family.

It catalyses the reaction L-methionyl-tRNA(fMet) + (6R)-10-formyltetrahydrofolate = N-formyl-L-methionyl-tRNA(fMet) + (6S)-5,6,7,8-tetrahydrofolate + H(+). Attaches a formyl group to the free amino group of methionyl-tRNA(fMet). The formyl group appears to play a dual role in the initiator identity of N-formylmethionyl-tRNA by promoting its recognition by IF2 and preventing the misappropriation of this tRNA by the elongation apparatus. The sequence is that of Methionyl-tRNA formyltransferase from Acinetobacter baumannii (strain SDF).